The primary structure comprises 101 residues: Putative septation protein SpoVG (101 aa).

The segment at 82–101 (ELKKGGAAPARATGTDPHED) is disordered.

This sequence belongs to the SpoVG family.

In terms of biological role, could be involved in septation. The polypeptide is Putative septation protein SpoVG (Anaeromyxobacter dehalogenans (strain 2CP-1 / ATCC BAA-258)).